The following is a 426-amino-acid chain: Glutamate-1-semialdehyde 2,1-aminomutase (426 aa).

Lys265 is modified (N6-(pyridoxal phosphate)lysine).

Belongs to the class-III pyridoxal-phosphate-dependent aminotransferase family. HemL subfamily. As to quaternary structure, homodimer. Requires pyridoxal 5'-phosphate as cofactor.

It localises to the cytoplasm. The catalysed reaction is (S)-4-amino-5-oxopentanoate = 5-aminolevulinate. The protein operates within porphyrin-containing compound metabolism; protoporphyrin-IX biosynthesis; 5-aminolevulinate from L-glutamyl-tRNA(Glu): step 2/2. The chain is Glutamate-1-semialdehyde 2,1-aminomutase from Neisseria gonorrhoeae (strain NCCP11945).